A 379-amino-acid chain; its full sequence is MNVFWFLPTHGDGRYLGTAEGARPVTLPYLRQIAQAADDLGYHGVLVPTGRSCEDAWAVASAMIPLTQRLRFLVAVRPGVVSPTWAARMASTVDRLSDGRLLVNVVTGGDPAESEGDGVFLKHDDRYVVTDEFLGIWRRVMAGETVDFTGQHLRVKGAKILFPPLQAPHPPLYFGGSSPAAHGLAARHVDVYLTWGEPPAAVAEKIADVRRRAAAEQRTVRFGIRLHVIVRETSEAAWAAANDLIRHLDDSTIAAAQQAFGRLDSEGQRRMAALHKGRRDALEVSPNLWAGVGLVRGGAGTALVGDAETVARRMKEYAELGIETFILSGYPHLEEAYRVAELLFPRLPVERRTAGVSPNLTGPFGEIIANDIVPHRSQS.

It belongs to the SsuD family.

The catalysed reaction is an alkanesulfonate + FMNH2 + O2 = an aldehyde + FMN + sulfite + H2O + 2 H(+). Catalyzes the desulfonation of aliphatic sulfonates. In Sorangium cellulosum (strain So ce56) (Polyangium cellulosum (strain So ce56)), this protein is Alkanesulfonate monooxygenase.